Consider the following 144-residue polypeptide: MAVSFRGLSLSAHSEGLSEVDKNSGEPENTYILRPIFQQRFRPSVVKDCIHTVLKEELASAEYSPDEMPQLTKRLSEMIKDKLKELGYDRYKMVVQVVIGEQRGEGVFMAARCFWDADTDNYTHDVFMNDSLFCVVAAFGCFYY.

Belongs to the dynein light chain Tctex-type family. As to quaternary structure, light chain of the cytoplasmic dynein complex 2, a multisubunit complex composed at least of eleven different proteins. The cytoplasmic dynein 2 complex consists of two catalytic heavy chains (HCs) and a number of non-catalytic subunits presented by intermediate chains (ICs), light intermediate chains (LICs) and light chains (LCs). Among them, a heavy chain (DYNC2H1), two intermediate chains (DYNC2I2 and DYNC2I1), a light intermediate chain (DYNC2LI1), and a light chain (DYNLT2B) are unique to the dynein-2 complex, but a subset of the light chains are also shared by dynein-1 and dynein-2 complexes. The dimer DYNLT2B-DYNLT1/DYNLT3 interacts with DYNC2I1; this interaction is crucial for retrograde trafficking of ciliary proteins.

The protein resides in the dynein axonemal particle. Its function is as follows. Acts as one of several non-catalytic accessory components of the cytoplasmic dynein 2 complex (dynein-2 complex), a motor protein complex that drives the movement of cargos along microtubules within cilia and flagella in concert with the intraflagellar transport (IFT) system. Required for proper retrograde ciliary transport. The protein is Dynein light chain Tctex-type protein 2B (Dynlt2b) of Mus musculus (Mouse).